Reading from the N-terminus, the 572-residue chain is Putative carbohydrate transport ATP-binding protein MPN_258 (572 aa).

ABC transporter domains follow at residues 6 to 253 (FRME…MGKE) and 327 to 572 (RFIR…LIMQ). 40-47 (GENGAGKS) contacts ATP.

Belongs to the ABC transporter superfamily.

Its subcellular location is the cell membrane. Its function is as follows. Part of the ABC transporter complex involved in carbohydrates import. Probably responsible for energy coupling to the transport system. In Mycoplasma pneumoniae (strain ATCC 29342 / M129 / Subtype 1) (Mycoplasmoides pneumoniae), this protein is Putative carbohydrate transport ATP-binding protein MPN_258.